An 82-amino-acid chain; its full sequence is Omega-conotoxin PnVIB (82 aa).

The signal sequence occupies residues 1-22 (MKLTCMMIVAVLFLTAWTVVTA). The propeptide occupies 23–52 (EPHSSNVLENLYLKAHHEMENPEASKLNTR). Disulfide bonds link Cys-56/Cys-73, Cys-63/Cys-77, and Cys-72/Cys-81.

In terms of tissue distribution, expressed by the venom duct.

The protein resides in the secreted. Omega-conotoxins act at presynaptic membranes, they bind and block voltage-gated calcium channels (Cav). Acts on high voltage-activated (HVA) calcium currents in molluscan neurons. This chain is Omega-conotoxin PnVIB, found in Conus pennaceus (Feathered cone).